We begin with the raw amino-acid sequence, 854 residues long: DNA mismatch repair protein MutS (854 aa).

The disordered stretch occupies residues 1-21 (MTASDIQPTEPHTPPTPHADT). 658–665 (GPNASGKS) provides a ligand contact to ATP.

The protein belongs to the DNA mismatch repair MutS family.

This protein is involved in the repair of mismatches in DNA. It is possible that it carries out the mismatch recognition step. This protein has a weak ATPase activity. This is DNA mismatch repair protein MutS from Trichormus variabilis (strain ATCC 29413 / PCC 7937) (Anabaena variabilis).